A 430-amino-acid chain; its full sequence is Phosphomethylpyrimidine synthase 2 (430 aa).

Residues Asn66, Met95, Tyr124, His164, 186-188 (SRG), 227-230 (DGFR), and Glu266 contribute to the substrate site. His270 is a Zn(2+) binding site. Substrate is bound at residue Tyr293. Position 334 (His334) interacts with Zn(2+). Positions 411, 414, and 418 each coordinate [4Fe-4S] cluster.

It belongs to the ThiC family. As to quaternary structure, homodimer. The cofactor is [4Fe-4S] cluster.

It carries out the reaction 5-amino-1-(5-phospho-beta-D-ribosyl)imidazole + S-adenosyl-L-methionine = 4-amino-2-methyl-5-(phosphooxymethyl)pyrimidine + CO + 5'-deoxyadenosine + formate + L-methionine + 3 H(+). The protein operates within cofactor biosynthesis; thiamine diphosphate biosynthesis. Its function is as follows. Catalyzes the synthesis of the hydroxymethylpyrimidine phosphate (HMP-P) moiety of thiamine from aminoimidazole ribotide (AIR) in a radical S-adenosyl-L-methionine (SAM)-dependent reaction. The polypeptide is Phosphomethylpyrimidine synthase 2 (Syntrophotalea carbinolica (strain DSM 2380 / NBRC 103641 / GraBd1) (Pelobacter carbinolicus)).